The primary structure comprises 292 residues: Phosphatidylserine decarboxylase proenzyme (292 aa).

Catalysis depends on charge relay system; for autoendoproteolytic cleavage activity residues Asp-89, His-146, and Ser-252. Ser-252 acts as the Schiff-base intermediate with substrate; via pyruvic acid; for decarboxylase activity in catalysis. Ser-252 carries the post-translational modification Pyruvic acid (Ser); by autocatalysis.

Belongs to the phosphatidylserine decarboxylase family. PSD-B subfamily. Prokaryotic type I sub-subfamily. As to quaternary structure, heterodimer of a large membrane-associated beta subunit and a small pyruvoyl-containing alpha subunit. Pyruvate is required as a cofactor. In terms of processing, is synthesized initially as an inactive proenzyme. Formation of the active enzyme involves a self-maturation process in which the active site pyruvoyl group is generated from an internal serine residue via an autocatalytic post-translational modification. Two non-identical subunits are generated from the proenzyme in this reaction, and the pyruvate is formed at the N-terminus of the alpha chain, which is derived from the carboxyl end of the proenzyme. The autoendoproteolytic cleavage occurs by a canonical serine protease mechanism, in which the side chain hydroxyl group of the serine supplies its oxygen atom to form the C-terminus of the beta chain, while the remainder of the serine residue undergoes an oxidative deamination to produce ammonia and the pyruvoyl prosthetic group on the alpha chain. During this reaction, the Ser that is part of the protease active site of the proenzyme becomes the pyruvoyl prosthetic group, which constitutes an essential element of the active site of the mature decarboxylase.

It is found in the cell membrane. It carries out the reaction a 1,2-diacyl-sn-glycero-3-phospho-L-serine + H(+) = a 1,2-diacyl-sn-glycero-3-phosphoethanolamine + CO2. The protein operates within phospholipid metabolism; phosphatidylethanolamine biosynthesis; phosphatidylethanolamine from CDP-diacylglycerol: step 2/2. Functionally, catalyzes the formation of phosphatidylethanolamine (PtdEtn) from phosphatidylserine (PtdSer). The polypeptide is Phosphatidylserine decarboxylase proenzyme (Shewanella sp. (strain MR-7)).